A 126-amino-acid chain; its full sequence is Glycine cleavage system H protein (126 aa).

The 82-residue stretch at 23-104 (TLTVGITDHA…PYESWLFKIK (82 aa)) folds into the Lipoyl-binding domain. An N6-lipoyllysine modification is found at Lys64.

The protein belongs to the GcvH family. As to quaternary structure, the glycine cleavage system is composed of four proteins: P, T, L and H. Requires (R)-lipoate as cofactor.

Its function is as follows. The glycine cleavage system catalyzes the degradation of glycine. The H protein shuttles the methylamine group of glycine from the P protein to the T protein. In Paraburkholderia phytofirmans (strain DSM 17436 / LMG 22146 / PsJN) (Burkholderia phytofirmans), this protein is Glycine cleavage system H protein.